The sequence spans 129 residues: Lysozyme C-3 (129 aa).

The 129-residue stretch at 1–129 (KVYERCELAA…VSRWIRGCRL (129 aa)) folds into the C-type lysozyme domain. 4 cysteine pairs are disulfide-bonded: C6–C127, C30–C115, C64–C80, and C76–C94. Active-site residues include E35 and D52.

This sequence belongs to the glycosyl hydrolase 22 family.

It localises to the secreted. It catalyses the reaction Hydrolysis of (1-&gt;4)-beta-linkages between N-acetylmuramic acid and N-acetyl-D-glucosamine residues in a peptidoglycan and between N-acetyl-D-glucosamine residues in chitodextrins.. Lysozymes have primarily a bacteriolytic function; those in tissues and body fluids are associated with the monocyte-macrophage system and enhance the activity of immunoagents. This Anas platyrhynchos (Mallard) protein is Lysozyme C-3.